The chain runs to 367 residues: Uptake hydrogenase small subunit (367 aa).

The segment at residues 1 to 45 (MTPTETFYEVMRRQGVTRRSFLKFCSLTATALGLGPAYTSEIAHA) is a signal peptide (tat-type signal). 8 residues coordinate [4Fe-4S] cluster: cysteine 62, cysteine 65, cysteine 160, cysteine 194, histidine 232, cysteine 235, cysteine 260, and cysteine 266. Positions 275, 294, and 297 each coordinate [3Fe-4S] cluster.

It belongs to the [NiFe]/[NiFeSe] hydrogenase small subunit family. As to quaternary structure, heterodimer of a large and a small subunit. [4Fe-4S] cluster is required as a cofactor. Requires [3Fe-4S] cluster as cofactor. Post-translationally, predicted to be exported by the Tat system. The position of the signal peptide cleavage has been experimentally proven.

It is found in the cell membrane. The catalysed reaction is H2 + A = AH2. Functionally, this enzyme recycles the H(2) produced by nitrogenase to increase the production of ATP and to protect nitrogenase against inhibition or damage by O(2) under carbon- or phosphate-limited conditions. This chain is Uptake hydrogenase small subunit (hoxS), found in Afipia carboxidovorans (strain ATCC 49405 / DSM 1227 / KCTC 32145 / OM5) (Oligotropha carboxidovorans).